The chain runs to 359 residues: Dual-specificity RNA methyltransferase RlmN (359 aa).

E102 (proton acceptor) is an active-site residue. Residues 108–351 enclose the Radical SAM core domain; the sequence is EKKRATLCIS…IRKNRGSDIQ (244 aa). Cysteines 115 and 354 form a disulfide. [4Fe-4S] cluster is bound by residues C122, C126, and C129. S-adenosyl-L-methionine-binding positions include 178–179, S210, 232–234, and N311; these read GE and SLH. The active-site S-methylcysteine intermediate is C354.

This sequence belongs to the radical SAM superfamily. RlmN family. [4Fe-4S] cluster serves as cofactor.

It is found in the cytoplasm. It catalyses the reaction adenosine(2503) in 23S rRNA + 2 reduced [2Fe-2S]-[ferredoxin] + 2 S-adenosyl-L-methionine = 2-methyladenosine(2503) in 23S rRNA + 5'-deoxyadenosine + L-methionine + 2 oxidized [2Fe-2S]-[ferredoxin] + S-adenosyl-L-homocysteine. The catalysed reaction is adenosine(37) in tRNA + 2 reduced [2Fe-2S]-[ferredoxin] + 2 S-adenosyl-L-methionine = 2-methyladenosine(37) in tRNA + 5'-deoxyadenosine + L-methionine + 2 oxidized [2Fe-2S]-[ferredoxin] + S-adenosyl-L-homocysteine. Functionally, specifically methylates position 2 of adenine 2503 in 23S rRNA and position 2 of adenine 37 in tRNAs. m2A2503 modification seems to play a crucial role in the proofreading step occurring at the peptidyl transferase center and thus would serve to optimize ribosomal fidelity. The sequence is that of Dual-specificity RNA methyltransferase RlmN from Buchnera aphidicola subsp. Cinara cedri (strain Cc).